The sequence spans 306 residues: MTEKVAVLLGGTSAEREVSLLSGQAVLAGLKEAGINAHAVDTRDFPVTTLKEEGFTNVFIALHGRGGEDGTLQGVLEFLGLPYTGSGVMASALTMDKLRTKQVWQAVGLPVSPYVALDRRQYLDTEANTLLAQFTHLGLPLIVKPSREGSSVGMSKVNTLSDLPAALEEAFRHDDDVLVEKWLSGPEYTVAILGDEVLPSIRIQPAGTFYDYEAKYLSDDTQYFCPSGLSDEQEQALAALAMAAYRAVDCSGWGRVDFMLDSDDAFYLLEVNTSPGMTSHSLVPMAARQRGLTFSQLVVKILELAG.

Residues Lys101–Glu303 form the ATP-grasp domain. Phe134–Thr189 provides a ligand contact to ATP. Positions 257, 270, and 272 each coordinate Mg(2+).

This sequence belongs to the D-alanine--D-alanine ligase family. It depends on Mg(2+) as a cofactor. Mn(2+) serves as cofactor.

It is found in the cytoplasm. It carries out the reaction 2 D-alanine + ATP = D-alanyl-D-alanine + ADP + phosphate + H(+). Its pathway is cell wall biogenesis; peptidoglycan biosynthesis. Its function is as follows. Cell wall formation. The protein is D-alanine--D-alanine ligase of Pectobacterium atrosepticum (strain SCRI 1043 / ATCC BAA-672) (Erwinia carotovora subsp. atroseptica).